A 273-amino-acid polypeptide reads, in one-letter code: Undecaprenyl-diphosphatase (273 aa).

7 helical membrane passes run 4–24 (LILI…FLPI), 43–63 (KAQV…CWEY), 82–102 (FVLN…LFIK), 108–128 (LFHP…ILWA), 183–203 (AAEF…FYDV), 217–237 (MFVV…RGFI), and 253–273 (IGFG…WSAG).

This sequence belongs to the UppP family.

The protein resides in the cell inner membrane. It catalyses the reaction di-trans,octa-cis-undecaprenyl diphosphate + H2O = di-trans,octa-cis-undecaprenyl phosphate + phosphate + H(+). Functionally, catalyzes the dephosphorylation of undecaprenyl diphosphate (UPP). Confers resistance to bacitracin. This chain is Undecaprenyl-diphosphatase, found in Nitrosomonas eutropha (strain DSM 101675 / C91 / Nm57).